We begin with the raw amino-acid sequence, 492 residues long: DEAD-box ATP-dependent RNA helicase RhpA (492 aa).

The Q motif signature appears at 20–48 (PSFNDLGLKESVLKSVYEAGFTSPSPIQE). Positions 51–220 (IPAVLQGRDV…DKILENPIKI (170 aa)) constitute a Helicase ATP-binding domain. 64–71 (AQTGTGKT) serves as a coordination point for ATP. Positions 168 to 171 (DESD) match the DEAD box motif. The region spanning 231-393 (DITQRFYVIN…EIPTINENQI (163 aa)) is the Helicase C-terminal domain. The segment at 445 to 492 (AIQNPKEKTPKPSHKKTPQHERARSFKKGQHRDRHPKTNHHSKKPKRR) is disordered. The segment covering 469–492 (SFKKGQHRDRHPKTNHHSKKPKRR) has biased composition (basic residues).

The protein belongs to the DEAD box helicase family. As to quaternary structure, homodimer. Interacts with RNase J (rnj), might be a member of a minimal RNA degradosome complex.

It localises to the cytoplasm. It catalyses the reaction ATP + H2O = ADP + phosphate + H(+). Functionally, DEAD-box RNA helicase probably involved in RNA degradation. Unwinds dsRNA in both 5'- and 3'-directions. Background RNA-dependent ATPase activity is stimulated about 5-fold by RNaseJ (rnj). Stimulates the dsRNase activity of RNase J. The polypeptide is DEAD-box ATP-dependent RNA helicase RhpA (rhpA) (Helicobacter pylori (strain B128)).